The chain runs to 416 residues: Multifunctional CCA protein (416 aa).

Glycine 8 and arginine 11 together coordinate ATP. CTP is bound by residues glycine 8 and arginine 11. Mg(2+)-binding residues include aspartate 21 and aspartate 23. Residues arginine 91, arginine 138, and arginine 141 each contribute to the ATP site. Positions 91, 138, and 141 each coordinate CTP. The HD domain occupies 229-331; that stretch reads TGLHQELVSD…YELLQRCDAF (103 aa).

It belongs to the tRNA nucleotidyltransferase/poly(A) polymerase family. Bacterial CCA-adding enzyme type 1 subfamily. In terms of assembly, monomer. Can also form homodimers and oligomers. The cofactor is Mg(2+). It depends on Ni(2+) as a cofactor.

It carries out the reaction a tRNA precursor + 2 CTP + ATP = a tRNA with a 3' CCA end + 3 diphosphate. The catalysed reaction is a tRNA with a 3' CCA end + 2 CTP + ATP = a tRNA with a 3' CCACCA end + 3 diphosphate. Catalyzes the addition and repair of the essential 3'-terminal CCA sequence in tRNAs without using a nucleic acid template. Adds these three nucleotides in the order of C, C, and A to the tRNA nucleotide-73, using CTP and ATP as substrates and producing inorganic pyrophosphate. tRNA 3'-terminal CCA addition is required both for tRNA processing and repair. Also involved in tRNA surveillance by mediating tandem CCA addition to generate a CCACCA at the 3' terminus of unstable tRNAs. While stable tRNAs receive only 3'-terminal CCA, unstable tRNAs are marked with CCACCA and rapidly degraded. The chain is Multifunctional CCA protein from Xylella fastidiosa (strain M23).